The primary structure comprises 206 residues: Probable GTP-binding protein EngB (206 aa).

The EngB-type G domain occupies 8–195 (RSDEVVLVGR…EDAVNSHFDA (188 aa)). GTP contacts are provided by residues 16-23 (GRSNVGKS), 41-45 (GVTRQ), 60-63 (DLPG), 140-143 (NKMD), and 175-177 (ITA). Mg(2+)-binding residues include Ser23 and Thr43.

It belongs to the TRAFAC class TrmE-Era-EngA-EngB-Septin-like GTPase superfamily. EngB GTPase family. Mg(2+) serves as cofactor.

Necessary for normal cell division and for the maintenance of normal septation. The polypeptide is Probable GTP-binding protein EngB (Halobacterium salinarum (strain ATCC 29341 / DSM 671 / R1)).